A 98-amino-acid polypeptide reads, in one-letter code: Large ribosomal subunit protein uL23 (98 aa).

The protein belongs to the universal ribosomal protein uL23 family. In terms of assembly, part of the 50S ribosomal subunit. Contacts protein L29, and trigger factor when it is bound to the ribosome.

One of the early assembly proteins it binds 23S rRNA. One of the proteins that surrounds the polypeptide exit tunnel on the outside of the ribosome. Forms the main docking site for trigger factor binding to the ribosome. In Chromohalobacter salexigens (strain ATCC BAA-138 / DSM 3043 / CIP 106854 / NCIMB 13768 / 1H11), this protein is Large ribosomal subunit protein uL23.